The primary structure comprises 331 residues: NADH-quinone oxidoreductase subunit H (331 aa).

Transmembrane regions (helical) follow at residues 7-27 (ALVT…AVVI), 81-101 (MIFT…FAIV), 114-134 (IGIL…LFAG), 154-174 (ISYE…VGSF), 187-207 (VWFI…GVAV), 238-258 (FFVG…TLFF), 271-291 (WLSF…FILI), and 310-330 (VCLP…LAAA).

This sequence belongs to the complex I subunit 1 family. As to quaternary structure, NDH-1 is composed of 13 different subunits. Subunits NuoA, H, J, K, L, M, N constitute the membrane sector of the complex.

The protein resides in the cell inner membrane. It carries out the reaction a quinone + NADH + 5 H(+)(in) = a quinol + NAD(+) + 4 H(+)(out). NDH-1 shuttles electrons from NADH, via FMN and iron-sulfur (Fe-S) centers, to quinones in the respiratory chain. The immediate electron acceptor for the enzyme in this species is believed to be ubiquinone. Couples the redox reaction to proton translocation (for every two electrons transferred, four hydrogen ions are translocated across the cytoplasmic membrane), and thus conserves the redox energy in a proton gradient. This subunit may bind ubiquinone. This is NADH-quinone oxidoreductase subunit H from Pseudomonas paraeruginosa (strain DSM 24068 / PA7) (Pseudomonas aeruginosa (strain PA7)).